Reading from the N-terminus, the 507-residue chain is Steroid 17-alpha-hydroxylase/17,20 lyase (507 aa).

Heme is bound at residue C441.

Belongs to the cytochrome P450 family. Heme serves as cofactor.

The protein resides in the endoplasmic reticulum membrane. It is found in the microsome membrane. It catalyses the reaction a C21-steroid + reduced [NADPH--hemoprotein reductase] + O2 = a 17alpha-hydroxy-C21-steroid + oxidized [NADPH--hemoprotein reductase] + H2O + H(+). It carries out the reaction progesterone + reduced [NADPH--hemoprotein reductase] + O2 = 17alpha-hydroxyprogesterone + oxidized [NADPH--hemoprotein reductase] + H2O + H(+). The enzyme catalyses pregnenolone + reduced [NADPH--hemoprotein reductase] + O2 = 17alpha-hydroxypregnenolone + oxidized [NADPH--hemoprotein reductase] + H2O + H(+). The catalysed reaction is 17alpha-hydroxyprogesterone + reduced [NADPH--hemoprotein reductase] + O2 = androst-4-ene-3,17-dione + acetate + oxidized [NADPH--hemoprotein reductase] + H2O + 2 H(+). It catalyses the reaction 17alpha-hydroxyprogesterone + reduced [NADPH--hemoprotein reductase] + O2 = 16alpha,17alpha-dihydroxyprogesterone + oxidized [NADPH--hemoprotein reductase] + H2O + H(+). It carries out the reaction 16alpha,17alpha-dihydroxyprogesterone + reduced [NADPH--hemoprotein reductase] + O2 = 6beta,16alpha,17alpha-trihydroxyprogesterone + oxidized [NADPH--hemoprotein reductase] + H2O + H(+). The enzyme catalyses 17alpha-hydroxypregnenolone + reduced [NADPH--hemoprotein reductase] + O2 = 3beta-hydroxyandrost-5-en-17-one + acetate + oxidized [NADPH--hemoprotein reductase] + H2O + 2 H(+). The catalysed reaction is 16alpha,17alpha-dihydroxypregnenolone + reduced [NADPH--hemoprotein reductase] + O2 = 3beta,16alpha-dihydroxy-androst-5-en-17-one + acetate + oxidized [NADPH--hemoprotein reductase] + H2O + 2 H(+). It catalyses the reaction 3beta-hydroxyandrost-5-en-17-one + reduced [NADPH--hemoprotein reductase] + O2 = 3beta,16alpha-dihydroxy-androst-5-en-17-one + oxidized [NADPH--hemoprotein reductase] + H2O + H(+). It carries out the reaction androst-4-ene-3,17-dione + reduced [NADPH--hemoprotein reductase] + O2 = 16alpha-hydroxyandrost-4-ene-3,17-dione + oxidized [NADPH--hemoprotein reductase] + H2O + H(+). The protein operates within steroid hormone biosynthesis. Its pathway is steroid biosynthesis; glucocorticoid biosynthesis. Regulated predominantly by intracellular cAMP levels. The 17,20-lyase activity is stimulated by cytochrome b5, which acts as an allosteric effector increasing the Vmax of the lyase activity. Functionally, a cytochrome P450 monooxygenase involved in corticoid and androgen biosynthesis. Catalyzes 17-alpha hydroxylation of C21 steroids, which is common for both pathways. A second oxidative step, required only for androgen synthesis, involves an acyl-carbon cleavage. The 17-alpha hydroxy intermediates, as part of adrenal glucocorticoids biosynthesis pathway, are precursors of cortisol. Hydroxylates steroid hormones, pregnenolone and progesterone to form 17-alpha hydroxy metabolites, followed by the cleavage of the C17-C20 bond to form C19 steroids, dehydroepiandrosterone (DHEA) and androstenedione. Has 16-alpha hydroxylase activity. Catalyzes 16-alpha hydroxylation of 17-alpha hydroxy pregnenolone, followed by the cleavage of the C17-C20 bond to form 16-alpha-hydroxy DHEA. Also 16-alpha hydroxylates androgens, relevant for estriol synthesis. Mechanistically, uses molecular oxygen inserting one oxygen atom into a substrate, and reducing the second into a water molecule, with two electrons provided by NADPH via cytochrome P450 reductase (CPR; NADPH-ferrihemoprotein reductase). This Rattus norvegicus (Rat) protein is Steroid 17-alpha-hydroxylase/17,20 lyase (Cyp17a1).